A 379-amino-acid polypeptide reads, in one-letter code: Omega-3 fatty acid desaturase, endoplasmic reticulum (379 aa).

Residues 52-72 form a helical membrane-spanning segment; the sequence is LSYVVRDVIFVATLIGIAIHL. The Histidine box-1 motif lies at 97 to 101; sequence HDCGH. The Histidine box-2 motif lies at 133–137; sequence HKTHH. Transmembrane regions (helical) follow at residues 213–233 and 236–256; these read TLCWTVMAALLLYLCTAFGSL and FKIYGAPYLIFVMWLDFVTYL. The Histidine box-3 motif lies at 300-304; the sequence is HVIHH.

The protein belongs to the fatty acid desaturase type 1 family.

It is found in the endoplasmic reticulum membrane. The protein operates within lipid metabolism; polyunsaturated fatty acid biosynthesis. In terms of biological role, ER (microsomal) omega-3 fatty acid desaturase introduces the third double bond in the biosynthesis of 18:3 fatty acids, important constituents of plant membranes. It is thought to use cytochrome b5 as an electron donor and to act on fatty acids esterified to phosphatidylcholine and, possibly, other phospholipids. This is Omega-3 fatty acid desaturase, endoplasmic reticulum (FAD3) from Nicotiana tabacum (Common tobacco).